Here is a 288-residue protein sequence, read N- to C-terminus: Borealin (288 aa).

The tract at residues 1–58 (MAPKKRSSRGTRTNTLRSRKLASFLKDFDREVQVRTKQIESDRQTLLKEVENLYNIEV) is required for interaction with INCENP. The segment at 1-88 (MAPKKRSSRG…NRQALEEAAT (88 aa)) is required for centromere localization. The segment at 1–149 (MAPKKRSSRG…RKSHKNLRSA (149 aa)) is required for interaction with SENP3. The interval 10–109 (GTRTNTLRSR…TAEAIQTPLK (100 aa)) is required to form a minimal CPC core complex that localizes to the central spindle and midbody and properly executes the role of the CPC during cytokinesis. A required for interaction with INCENP and BIRC5 region spans residues 20–78 (KLASFLKDFDREVQVRTKQIESDRQTLLKEVENLYNIEVLRLPKALQVMKWLDYFALGG). Phosphothreonine; by TTK is present on threonine 88. Citrulline is present on arginine 91. Threonine 94 carries the post-translational modification Phosphothreonine; by TTK. Threonine 106 carries the phosphothreonine modification. Position 110 is a phosphoserine (serine 110). Positions 124–134 (KEEEEDEEEEG) are enriched in acidic residues. Residues 124–173 (KEEEEDEEEEGGGGGGRKSHKNLRSARVKRCPPSKKRTQSIQGRSRSKRL) form a disordered region. Basic residues predominate over residues 140–161 (RKSHKNLRSARVKRCPPSKKRT). Lysine 144 participates in a covalent cross-link: Glycyl lysine isopeptide (Lys-Gly) (interchain with G-Cter in SUMO2). The residue at position 174 (serine 174) is a Phosphoserine; by AURKB. Phosphothreonine occurs at positions 197 and 212. Residues serine 227, serine 232, serine 246, and serine 252 each carry the phosphoserine modification.

The protein belongs to the borealin family. In terms of assembly, may form homooligomers and homodimers. Component of the chromosomal passenger complex (CPC) composed of at least BIRC5/survivin, CDCA8/borealin, INCENP, AURKB or AURKC; in the complex forms a triple-helix bundle-based subcomplex with INCENP and BIRC5. Interacts with SENP3, UBE2I and RANBP2. Interacts (phosphorylated) with SGO1 and SGO2; the association is dependent on CDK1. In terms of processing, phosphorylated by TTK, essentially at Thr-88 and Thr-94. Phosphorylation (probably by CDK1) promotes targeting of the CPC to centromeric DNA. Post-translationally, sumoylated by UBE2I and RANBP2. Desumoylated by SENP3 through the removal of SUMO2 and SUMO3. Citrullinated by PADI4.

Its subcellular location is the nucleus. The protein localises to the nucleolus. The protein resides in the cytoplasm. It localises to the chromosome. It is found in the centromere. Its subcellular location is the cytoskeleton. The protein localises to the spindle. Component of the chromosomal passenger complex (CPC), a complex that acts as a key regulator of mitosis. The CPC complex has essential functions at the centromere in ensuring correct chromosome alignment and segregation and is required for chromatin-induced microtubule stabilization and spindle assembly. In the complex, it may be required to direct the CPC to centromeric DNA. In Rattus norvegicus (Rat), this protein is Borealin (Cdca8).